The sequence spans 1042 residues: Signal-induced proliferation-associated protein 1 (1042 aa).

Disordered regions lie at residues 1–87 (MPMW…TSTR) and 132–153 (SQGM…EDQA). Threonine 64 is subject to Phosphothreonine. Phosphoserine is present on serine 67. Residues 134–146 (GMGSHSEASSGTL) show a composition bias toward polar residues. Residues serine 182, serine 304, and serine 314 each carry the phosphoserine modification. The Rap-GAP domain occupies 321-539 (LLTLDEQVLS…RTRQQYLQDL (219 aa)). Residues 687 to 763 (ELALPRDGQG…VCVTVLPPDE (77 aa)) enclose the PDZ domain. Phosphoserine is present on residues serine 817, serine 839, and serine 912. Positions 830-903 (EFLHSQNSLS…PAPELRASFL (74 aa)) are disordered. Positions 832–845 (LHSQNSLSPRSSLS) are enriched in low complexity. The interval 946-980 (LSREGQPIPESGDPKGTPKSDAEPEPGNLSEKVSH) is disordered. Basic and acidic residues predominate over residues 957–967 (GDPKGTPKSDA). The stretch at 972-1034 (GNLSEKVSHL…TRLLLASKQL (63 aa)) forms a coiled coil.

In terms of assembly, interacts with RRP1B; the interaction leads to inhibition of SIPA1 GTPase activity. In terms of tissue distribution, expressed in fetal as well as in adult tissues. Expressed abundantly in the lymphoid tissues such as thymus, spleen and peripheral blood lymphocytes and also shows a significant expression in the spinal cord.

It is found in the nucleus. The protein localises to the cytoplasm. The protein resides in the perinuclear region. It localises to the endomembrane system. Functionally, GTPase activator for the nuclear Ras-related regulatory proteins Rap1 and Rap2 in vitro, converting them to the putatively inactive GDP-bound state. Affects cell cycle progression. This Homo sapiens (Human) protein is Signal-induced proliferation-associated protein 1 (SIPA1).